We begin with the raw amino-acid sequence, 336 residues long: 3-isopropylmalate dehydrogenase (336 aa).

Substrate-binding residues include Arg-87, Arg-97, Arg-121, and Asp-211. Residues Asp-211, Asp-235, and Asp-239 each coordinate Mg(2+). Residue 271-283 participates in NAD(+) binding; the sequence is GSAPDIAGQGIAD.

The protein belongs to the isocitrate and isopropylmalate dehydrogenases family. LeuB type 2 subfamily. Homodimer. It depends on Mg(2+) as a cofactor. Mn(2+) is required as a cofactor.

It localises to the cytoplasm. The catalysed reaction is (2R,3S)-3-isopropylmalate + NAD(+) = 4-methyl-2-oxopentanoate + CO2 + NADH. It participates in amino-acid biosynthesis; L-leucine biosynthesis; L-leucine from 3-methyl-2-oxobutanoate: step 3/4. Its function is as follows. Catalyzes the oxidation of 3-carboxy-2-hydroxy-4-methylpentanoate (3-isopropylmalate) to 3-carboxy-4-methyl-2-oxopentanoate. The product decarboxylates to 4-methyl-2 oxopentanoate. This is 3-isopropylmalate dehydrogenase (leuB) from Mycobacterium tuberculosis (strain CDC 1551 / Oshkosh).